We begin with the raw amino-acid sequence, 386 residues long: Chaperone protein DnaJ (386 aa).

The J domain maps to 5-70 (DYYEVLGVER…QKRAAYDRYG (66 aa)). The CR-type zinc-finger motif lies at 138-216 (GKDETIHVPQ…CGGHGQVKEE (79 aa)). Cys-151, Cys-154, Cys-168, Cys-171, Cys-190, Cys-193, Cys-204, and Cys-207 together coordinate Zn(2+). CXXCXGXG motif repeat units follow at residues 151–158 (CRPCEGTG), 168–175 (CETCGGHG), 190–197 (CHICQGRG), and 204–211 (CKTCGGHG).

Belongs to the DnaJ family. As to quaternary structure, homodimer. Requires Zn(2+) as cofactor.

Its subcellular location is the cytoplasm. Its function is as follows. Participates actively in the response to hyperosmotic and heat shock by preventing the aggregation of stress-denatured proteins and by disaggregating proteins, also in an autonomous, DnaK-independent fashion. Unfolded proteins bind initially to DnaJ; upon interaction with the DnaJ-bound protein, DnaK hydrolyzes its bound ATP, resulting in the formation of a stable complex. GrpE releases ADP from DnaK; ATP binding to DnaK triggers the release of the substrate protein, thus completing the reaction cycle. Several rounds of ATP-dependent interactions between DnaJ, DnaK and GrpE are required for fully efficient folding. Also involved, together with DnaK and GrpE, in the DNA replication of plasmids through activation of initiation proteins. The protein is Chaperone protein DnaJ of Hyphomonas neptunium (strain ATCC 15444).